The primary structure comprises 386 residues: Ribonuclease D (386 aa).

A 3'-5' exonuclease domain is found at 3-174; that stretch reads HTITTTDELA…EIYEYLSAEL (172 aa). The region spanning 213 to 294 is the HRDC domain; sequence SGRVVAIAQQ…ARGMSVPNSE (82 aa).

It belongs to the RNase D family. It depends on a divalent metal cation as a cofactor.

It is found in the cytoplasm. It catalyses the reaction Exonucleolytic cleavage that removes extra residues from the 3'-terminus of tRNA to produce 5'-mononucleotides.. Functionally, exonuclease involved in the 3' processing of various precursor tRNAs. Initiates hydrolysis at the 3'-terminus of an RNA molecule and releases 5'-mononucleotides. This is Ribonuclease D from Jannaschia sp. (strain CCS1).